The sequence spans 198 residues: Recombination protein RecR (198 aa).

A C4-type zinc finger spans residues 57–72 (CSVCGNLTDEDPCAIC). The 96-residue stretch at 80–175 (STILIVEDSR…KVTRLARGLA (96 aa)) folds into the Toprim domain.

The protein belongs to the RecR family.

Its function is as follows. May play a role in DNA repair. It seems to be involved in an RecBC-independent recombinational process of DNA repair. It may act with RecF and RecO. The chain is Recombination protein RecR from Streptococcus sanguinis (strain SK36).